The sequence spans 215 residues: Ribosomal RNA small subunit methyltransferase G (215 aa).

S-adenosyl-L-methionine is bound by residues glycine 77, phenylalanine 82, 130 to 131 (IE), and arginine 146.

It belongs to the methyltransferase superfamily. RNA methyltransferase RsmG family.

It is found in the cytoplasm. It carries out the reaction guanosine(527) in 16S rRNA + S-adenosyl-L-methionine = N(7)-methylguanosine(527) in 16S rRNA + S-adenosyl-L-homocysteine. In terms of biological role, specifically methylates the N7 position of guanine in position 527 of 16S rRNA. The protein is Ribosomal RNA small subunit methyltransferase G of Bartonella quintana (strain Toulouse) (Rochalimaea quintana).